The following is a 241-amino-acid chain: MSVCMPQKRYYRQRAHSNPMADHTFQYPVCPEQMDWSPLYPQYFPQQEEAGGAQVEFADIGCGYGGLLVQLSLLFPQQLILGLEIRVKVSDYVQDRIRSLRVAEPGRYQNIACLRSNAMKYLPNFFRKGQLSKMFFLFPDPHFKKTKHKWRIISPTLLAEYAYTLRIGGLVYTNTDVEEVHEWIVQHFSDHPLFSRVTEEQLADDIIVGHLGTCTEEGKKVQRNGGKNFLAVFRRVEDPQT.

Glycine 61, glutamate 84, arginine 86, asparagine 117, alanine 118, and leucine 137 together coordinate S-adenosyl-L-methionine. The active site involves aspartate 140. Residues 141–149 are alphaC helix; it reads PHFKKTKHK. Positions 215 and 217 each coordinate S-adenosyl-L-methionine. The alpha6 helix stretch occupies residues 215–223; sequence TEEGKKVQR.

It belongs to the class I-like SAM-binding methyltransferase superfamily. TrmB family. Catalytic component of the METTL1-WDR4 complex, composed of mettl1 and wdr4.

The protein localises to the nucleus. The enzyme catalyses guanosine(46) in tRNA + S-adenosyl-L-methionine = N(7)-methylguanosine(46) in tRNA + S-adenosyl-L-homocysteine. The catalysed reaction is a guanosine in mRNA + S-adenosyl-L-methionine = an N(7)-methylguanosine in mRNA + S-adenosyl-L-homocysteine. It carries out the reaction a guanosine in miRNA + S-adenosyl-L-methionine = an N(7)-methylguanosine in miRNA + S-adenosyl-L-homocysteine. Its pathway is tRNA modification; N(7)-methylguanine-tRNA biosynthesis. Functionally, catalytic component of METTL1-WDR4 methyltransferase complex that mediates the formation of N(7)-methylguanine in a subset of RNA species, such as tRNAs, mRNAs and microRNAs (miRNAs). Catalyzes the formation of N(7)-methylguanine at position 46 (m7G46) in a large subset of tRNAs that contain the 5'-RAGGU-3' motif within the variable loop. M7G46 interacts with C13-G22 in the D-loop to stabilize tRNA tertiary structure and protect tRNAs from decay. Also acts as a methyltransferase for a subset of internal N(7)-methylguanine in mRNAs. Internal N(7)-methylguanine methylation of mRNAs in response to stress promotes their relocalization to stress granules, thereby suppressing their translation. Also methylates a specific subset of miRNAs. The polypeptide is tRNA (guanine-N(7)-)-methyltransferase B (mettl1-B) (Xenopus tropicalis (Western clawed frog)).